A 251-amino-acid chain; its full sequence is Adenosylcobinamide-GDP ribazoletransferase (251 aa).

5 helical membrane passes run Leu44–Gly64, Ile114–His134, Gly143–Val163, Ala177–Ala197, and Leu198–Leu218.

This sequence belongs to the CobS family. Mg(2+) is required as a cofactor.

It localises to the cell inner membrane. The enzyme catalyses alpha-ribazole + adenosylcob(III)inamide-GDP = adenosylcob(III)alamin + GMP + H(+). The catalysed reaction is alpha-ribazole 5'-phosphate + adenosylcob(III)inamide-GDP = adenosylcob(III)alamin 5'-phosphate + GMP + H(+). It participates in cofactor biosynthesis; adenosylcobalamin biosynthesis; adenosylcobalamin from cob(II)yrinate a,c-diamide: step 7/7. In terms of biological role, joins adenosylcobinamide-GDP and alpha-ribazole to generate adenosylcobalamin (Ado-cobalamin). Also synthesizes adenosylcobalamin 5'-phosphate from adenosylcobinamide-GDP and alpha-ribazole 5'-phosphate. The sequence is that of Adenosylcobinamide-GDP ribazoletransferase from Nitratidesulfovibrio vulgaris (strain DSM 19637 / Miyazaki F) (Desulfovibrio vulgaris).